Here is a 272-residue protein sequence, read N- to C-terminus: MKGILGRKVGMTQLFTNEGILIPVTIVEVKPNVVTKVLTVEKDGYSATQLATEDKKASQIRRPEINKFKQANTTPKRFVKEIRNMTGYSLGDTIDASLFQAGEIVDVTAISKGKGFAGTIKRWNQHIGPKSHGGGGGSQPLRQTGSIGDISGNRVWKGMTMPGHLGSEQVTIQNLEIVKEDPANNMLVIKGSIPGAKGALVVIKKAIKTSHKKEAVQLLNLKEALAKNELFEQAKKYNVELNMQMSIKEMQTLLDEAIKKAEEQKQPEGENK.

A disordered region spans residues 125–146 (QHIGPKSHGGGGGSQPLRQTGS).

This sequence belongs to the universal ribosomal protein uL3 family. In terms of assembly, part of the 50S ribosomal subunit. Forms a cluster with proteins L14 and L19.

Its function is as follows. One of the primary rRNA binding proteins, it binds directly near the 3'-end of the 23S rRNA, where it nucleates assembly of the 50S subunit. In Metamycoplasma arthritidis (strain 158L3-1) (Mycoplasma arthritidis), this protein is Large ribosomal subunit protein uL3.